Reading from the N-terminus, the 675-residue chain is Protein brown (675 aa).

Residues 1 to 419 (MQESGGSSGQ…TEDLRNIRSG (419 aa)) lie on the Cytoplasmic side of the membrane. Positions 34-261 (YSFWNECRKK…EVVAESHESL (228 aa)) constitute an ABC transporter domain. 66 to 73 (GGSGAGKT) is a binding site for ATP. The disordered stretch occupies residues 229-249 (EDSFETPSGESSASGSGSKSI). A compositionally biased stretch (low complexity) spans 236-248 (SGESSASGSGSKS). The helical transmembrane segment at 420–440 (LIAFGFFMITAVTLSLMYSGI) threads the bilayer. Topologically, residues 441–460 (GGLTQRTVQDVGGSIFMLSN) are extracellular. The chain crosses the membrane as a helical span at residues 461 to 481 (EMIFTFSYGVTYIFPAALPII). The Cytoplasmic segment spans residues 482–497 (RREVGEGTYSLSAYYV). The helical transmembrane segment at 498-518 (ALVLSFVPVAFFKGYVFLSVI) threads the bilayer. At 519-531 (YASIYYTRGFLLY) the chain is on the extracellular side. A helical membrane pass occupies residues 532 to 552 (LSMGFLMSLSAVAAVGYGVFL). The Cytoplasmic segment spans residues 553 to 568 (SSLFESDKMASECAAP). Residues 569-589 (FDLIFLIFGGTYMNVDTVPGL) form a helical membrane-spanning segment. The Extracellular segment spans residues 590–644 (KYLSLFFYSNEALMYKFWIDIDNIDCPVNEDHPCIKTGVEVLQQGSYRNADYTYW). A helical transmembrane segment spans residues 645–665 (LDCFSLVVVAVIFHIVSFGLV). Topologically, residues 666 to 675 (RRYIHRSGYY) are cytoplasmic.

It belongs to the ABC transporter superfamily. ABCG family. Eye pigment precursor importer (TC 3.A.1.204) subfamily. As to quaternary structure, may form a heterodimer with w/white.

Its subcellular location is the membrane. It carries out the reaction guanine(out) + ATP + H2O = guanine(in) + ADP + phosphate + H(+). It catalyses the reaction riboflavin(in) + ATP + H2O = riboflavin(out) + ADP + phosphate + H(+). The catalysed reaction is (6S)-5,6,7,8-tetrahydrofolate(out) + ATP + H2O = (6S)-5,6,7,8-tetrahydrofolate(in) + ADP + phosphate + H(+). In terms of biological role, ATP-dependent transporter of the ATP-binding cassette (ABC) family which transports various molecules including bioamines, neurotransmitters and metabolic intermediates. In the eye and probably in association with w/white, required for the transport of the eye red pigment precursor, guanine, into pigment cell granules. In Malpighian tubules, involved in guanine uptake. Probably in association with w/white, involved in aging-induced intestinal stem cell proliferation in the midgut by regulating tetrahydrofolate transport. The sequence is that of Protein brown from Drosophila melanogaster (Fruit fly).